The following is a 345-amino-acid chain: NADPH dehydrogenase (345 aa).

FMN is bound at residue 23–26 (SPMC). Residue Tyr-28 participates in substrate binding. Residues Ala-60 and Gln-102 each contribute to the FMN site. 164-167 (HGAH) is a binding site for substrate. FMN is bound by residues Arg-215 and 307–308 (GR).

Belongs to the NADH:flavin oxidoreductase/NADH oxidase family. NamA subfamily. In terms of assembly, homotetramer. The cofactor is FMN.

The enzyme catalyses A + NADPH + H(+) = AH2 + NADP(+). Its function is as follows. Catalyzes the reduction of the double bond of an array of alpha,beta-unsaturated aldehydes and ketones. It also reduces the nitro group of nitroester and nitroaromatic compounds. It could have a role in detoxification processes. The sequence is that of NADPH dehydrogenase from Bacillus thuringiensis subsp. konkukian (strain 97-27).